A 533-amino-acid chain; its full sequence is MQGACVLLLLGLHLQLSLGLVPVEEEDPAFWNRQAAQALDVAKKLQPIQTAAKNVILFLGDGMGVPTVTATRILKGQMNGKLGPETPLAMDQFPYVALSKTYNVDRQVPDSAGTATAYLCGVKGNYRTIGVSAAARYNQCKTTRGNEVTSVMNRAKKAGKSVGVVTTTRVQHASPAGAYAHTVNRNWYSDADLPADAQMNGCQDIAAQLVNNMDIDVILGGGRKYMFPVGTPDPEYPDDASVNGVRKRKQNLVQAWQAKHQGAQYVWNRTALLQAADDSSVTHLMGLFEPADMKYNVQQDHTKDPTLQEMTEVALRVVSRNPRGFYLFVEGGRIDHGHHDDKAYMALTEAGMFDNAIAKANELTSELDTLILVTADHSHVFSFGGYTLRGTSIFGLAPSKALDSKSYTSILYGNGPGYALGGGSRPDVNDSTSEDPSYQQQAAVPQASETHGGEDVAVFARGPQAHLVHGVEEETFVAHIMAFAGCVEPYTDCNLPAPTTATSIPDAAHLAASPPPLALLAGAMLLLLAPTLY.

The N-terminal stretch at 1–19 is a signal peptide; the sequence is MQGACVLLLLGLHLQLSLG. Residue Asp61 participates in Mg(2+) binding. 2 residues coordinate Zn(2+): Asp61 and Ser111. The Phosphoserine intermediate role is filled by Ser111. Cysteines 140 and 202 form a disulfide. Residue Ser174 coordinates Mg(2+). Glu235 lines the Ca(2+) pocket. Asn268 carries an N-linked (GlcNAc...) asparagine glycan. Ca(2+)-binding residues include Phe288, Glu289, and Asp304. Mg(2+) is bound at residue Glu330. Zn(2+) is bound by residues Asp335, His339, Asp376, and His377. A glycan (N-linked (GlcNAc...) asparagine) is linked at Asn429. Position 451 (His451) interacts with Zn(2+). An intrachain disulfide couples Cys486 to Cys493. Asp506 is lipidated: GPI-anchor amidated aspartate. A propeptide spans 507–533 (removed in mature form); that stretch reads AAHLAASPPPLALLAGAMLLLLAPTLY.

This sequence belongs to the alkaline phosphatase family. In terms of assembly, homodimer. Mg(2+) serves as cofactor. It depends on Zn(2+) as a cofactor. Ca(2+) is required as a cofactor.

The protein localises to the cell membrane. It carries out the reaction a phosphate monoester + H2O = an alcohol + phosphate. Alkaline phosphatase that can hydrolyze various phosphate compounds. This is Intestinal-type alkaline phosphatase (ALPI) from Bos taurus (Bovine).